The primary structure comprises 123 residues: Defensin beta 118 (123 aa).

The first 19 residues, 1–19 (MKLLLLALPMLVLLPQVIP), serve as a signal peptide directing secretion. Disulfide bonds link Cys27–Cys54, Cys34–Cys48, and Cys38–Cys55. 2 disordered regions span residues 59–79 (NEDH…STPG) and 102–123 (MVEE…HHSS). Positions 64 to 123 (QVPTTSPTPLSDSTPGSIDDILTVRFTTDYFEVSSKKDMVEESEAGWGTQTSLPDVHHSS) are excised as a propeptide. Low complexity predominate over residues 66-79 (PTTSPTPLSDSTPG).

The protein belongs to the beta-defensin family. The three-dimensional structure formed by the three intramolecular disulfide bridges is indispensable for antimicrobial activity.

It is found in the secreted. Host defense peptide that exhibits antimicrobial activity against both Gram-negative bacteria, such as E.coli and S.typhimurium, and Gram-positive bacteria, such as S.aureus and B.subtilis. Inhibits cell adhesion of E.coli on intestinal epithelial enterocytes. Causes rapid permeabilization of both the outer and inner membrane of E.coli, leading to morphological alterations on the bacterial surface. Binds to bacterial lipopolysaccharides (LPS) with high affinity, and may thereby be involved in immunoregulation through LPS neutralization. May contribute to epididymal innate immunity and protect the sperm against attack by microorganisms. The sequence is that of Defensin beta 118 (DEFB118) from Hylobates lar (Lar gibbon).